We begin with the raw amino-acid sequence, 642 residues long: Threonine--tRNA ligase (642 aa).

Residues 1–61 (MPVITLPDGS…ETDSTLSIIT (61 aa)) form the TGS domain. Positions 243–534 (DHRKIGKQLD…LTEEFAGFFP (292 aa)) are catalytic. Positions 334, 385, and 511 each coordinate Zn(2+).

The protein belongs to the class-II aminoacyl-tRNA synthetase family. In terms of assembly, homodimer. Requires Zn(2+) as cofactor.

The protein localises to the cytoplasm. It catalyses the reaction tRNA(Thr) + L-threonine + ATP = L-threonyl-tRNA(Thr) + AMP + diphosphate + H(+). Its function is as follows. Catalyzes the attachment of threonine to tRNA(Thr) in a two-step reaction: L-threonine is first activated by ATP to form Thr-AMP and then transferred to the acceptor end of tRNA(Thr). Also edits incorrectly charged L-seryl-tRNA(Thr). This Klebsiella pneumoniae (strain 342) protein is Threonine--tRNA ligase.